A 56-amino-acid polypeptide reads, in one-letter code: Large ribosomal subunit protein bL32 (56 aa).

The interval 1 to 38 is disordered; it reads MAVQQNKKSRSKRGMRRSHDSLSTAQLSVDATSGELHR. Basic residues predominate over residues 7–16; that stretch reads KKSRSKRGMR. The segment covering 21–31 has biased composition (polar residues); that stretch reads SLSTAQLSVDA.

It belongs to the bacterial ribosomal protein bL32 family.

The sequence is that of Large ribosomal subunit protein bL32 from Shewanella woodyi (strain ATCC 51908 / MS32).